A 275-amino-acid chain; its full sequence is 3-methyl-2-oxobutanoate hydroxymethyltransferase (275 aa).

Mg(2+)-binding residues include D44 and D83. 3-methyl-2-oxobutanoate contacts are provided by residues 44-45, D83, and K113; that span reads DS. A Mg(2+)-binding site is contributed by E115. The active-site Proton acceptor is E182.

This sequence belongs to the PanB family. As to quaternary structure, homodecamer; pentamer of dimers. Requires Mg(2+) as cofactor.

The protein localises to the cytoplasm. It carries out the reaction 3-methyl-2-oxobutanoate + (6R)-5,10-methylene-5,6,7,8-tetrahydrofolate + H2O = 2-dehydropantoate + (6S)-5,6,7,8-tetrahydrofolate. Its pathway is cofactor biosynthesis; (R)-pantothenate biosynthesis; (R)-pantoate from 3-methyl-2-oxobutanoate: step 1/2. Catalyzes the reversible reaction in which hydroxymethyl group from 5,10-methylenetetrahydrofolate is transferred onto alpha-ketoisovalerate to form ketopantoate. In Clostridium botulinum (strain 657 / Type Ba4), this protein is 3-methyl-2-oxobutanoate hydroxymethyltransferase.